The primary structure comprises 214 residues: Probable nicotinate-nucleotide adenylyltransferase (214 aa).

Belongs to the NadD family.

It carries out the reaction nicotinate beta-D-ribonucleotide + ATP + H(+) = deamido-NAD(+) + diphosphate. It participates in cofactor biosynthesis; NAD(+) biosynthesis; deamido-NAD(+) from nicotinate D-ribonucleotide: step 1/1. In terms of biological role, catalyzes the reversible adenylation of nicotinate mononucleotide (NaMN) to nicotinic acid adenine dinucleotide (NaAD). This is Probable nicotinate-nucleotide adenylyltransferase from Aeromonas hydrophila subsp. hydrophila (strain ATCC 7966 / DSM 30187 / BCRC 13018 / CCUG 14551 / JCM 1027 / KCTC 2358 / NCIMB 9240 / NCTC 8049).